Here is a 245-residue protein sequence, read N- to C-terminus: MNVTLLIPARYGSSRFPGKPLAPINGKPMIQHVYERAALAKGLKDIYVATDDERIKNAVEGFGGKVVMTGADAASGTDRIDDAITQLGLADDDLVINLQGDQPLIDPISIEQLVSLCERHPGEFDMATLGVEIRDEAQINDPNHVKMVFDNNFNALYFSRATIPFGRESSDYPVYKHLGIYAYTRKFIQTFAKLPLGRLEDLEKLEQLRALEYGYKIKVAISAFDSPEVDTPEDIRICEARLAVD.

Belongs to the KdsB family.

The protein resides in the cytoplasm. The catalysed reaction is 8-amino-3,8-dideoxy-alpha-D-manno-octulosonate + CTP = CMP-8-amino-3,8-dideoxy-alpha-D-manno-oct-2-ulosonate + diphosphate. Its pathway is bacterial outer membrane biogenesis; lipopolysaccharide biosynthesis. Activates KDO8N (a required 8-carbon sugar) for incorporation into bacterial lipopolysaccharide in the Shewanella genus. In Shewanella halifaxensis (strain HAW-EB4), this protein is 8-amino-3,8-dideoxy-manno-octulosonate cytidylyltransferase.